Reading from the N-terminus, the 740-residue chain is Eukaryotic translation initiation factor 3 subunit B (740 aa).

Residues 1-10 (MAPSFDTLTE) show a composition bias toward polar residues. Residues 1-22 (MAPSFDTLTEQDLHEEEEEEID) form a disordered region. Residues 13–22 (LHEEEEEEID) are compositionally biased toward acidic residues. The region spanning 40 to 126 (TFVVIDGLPV…HTLAVNKLMD (87 aa)) is the RRM domain. WD repeat units lie at residues 193–230 (AHWT…KQKQ), 232–289 (PHPF…RSFV), 302–343 (EPKK…LLGK), 513–556 (IEKK…EKPE), and 571–609 (VEHY…HTFA). The tract at residues 695–721 (DAYGVPEDVDSSKQAKDAPAVSEDQGE) is disordered.

The protein belongs to the eIF-3 subunit B family. Component of the eukaryotic translation initiation factor 3 (eIF-3) complex.

It localises to the cytoplasm. Its function is as follows. RNA-binding component of the eukaryotic translation initiation factor 3 (eIF-3) complex, which is involved in protein synthesis of a specialized repertoire of mRNAs and, together with other initiation factors, stimulates binding of mRNA and methionyl-tRNAi to the 40S ribosome. The eIF-3 complex specifically targets and initiates translation of a subset of mRNAs involved in cell proliferation. The chain is Eukaryotic translation initiation factor 3 subunit B (prt1) from Aspergillus niger (strain ATCC MYA-4892 / CBS 513.88 / FGSC A1513).